Here is a 174-residue protein sequence, read N- to C-terminus: 16S rRNA aminocarboxypropyltransferase (174 aa).

The S-adenosyl-L-methionine site is built by Thr-26, Leu-73, Leu-97, and Ser-116.

Belongs to the TDD superfamily. TSR3 family.

It localises to the cytoplasm. The catalysed reaction is an N(1)-methylpseudouridine in rRNA + S-adenosyl-L-methionine = N(1)-methyl-N(3)-[(3S)-3-amino-3-carboxypropyl]pseudouridine in rRNA + S-methyl-5'-thioadenosine + H(+). In terms of biological role, aminocarboxypropyltransferase that catalyzes the aminocarboxypropyl transfer on pseudouridine corresponding to position 914 in M.jannaschii 16S rRNA. It constitutes the last step in biosynthesis of the hypermodified N1-methyl-N3-(3-amino-3-carboxypropyl) pseudouridine (m1acp3-Psi). This is 16S rRNA aminocarboxypropyltransferase from Methanosarcina acetivorans (strain ATCC 35395 / DSM 2834 / JCM 12185 / C2A).